A 117-amino-acid chain; its full sequence is MSKKVLTAYNAIDHTYFSQLSQRNKALYMYRSILRLANKWESDSQREDIRYETRSTFQKNKDLTDTEIINDKIEEARSRMLTALHYNIPYEKKKYNIPKYQIQMKPPPDPKDESGIC.

This sequence belongs to the complex I LYR family.

This Dictyostelium discoideum (Social amoeba) protein is LYR motif-containing protein 1 (lyrm1).